The primary structure comprises 556 residues: Calcium-dependent protein kinase 5 (556 aa).

The tract at residues 1-40 (MGNSCRGSFKDKLDEGDNNKPEDYSKTSTTNLSSNSDHSP) is disordered. G2 carries the N-myristoyl glycine lipid modification. Positions 8–25 (SFKDKLDEGDNNKPEDYS) are enriched in basic and acidic residues. Residues 26-39 (KTSTTNLSSNSDHS) are compositionally biased toward low complexity. The region spanning 97 to 355 (YTLSRKLGQG…AHEVLRHPWI (259 aa)) is the Protein kinase domain. ATP-binding positions include 103–111 (LGQGQFGTT) and K126. The active-site Proton acceptor is the D221. Phosphoserine is present on S261. The interval 361–391 (APDRALDPAVLSRLKQFSAMNKLKKMALKVI) is autoinhibitory domain. EF-hand domains are found at residues 398-433 (EEIAGLREMFQAMDTDNSGAITFDELKAGLRKYGST), 434-469 (LKDTEIHDLMDAADVDNSGTIDYSEFIAATIHLNKL), 470-505 (EREEHLVAAFQYFDKDGSGFITIDELQQACVEHGMA), and 509-539 (LEDIIKEVDQNNDGKIDYGEFVEMMQKGNAG). The Ca(2+) site is built by D411, D413, S415, E422, D447, D449, S451, T453, E458, D483, D485, S487, E494, D517, N519, D521, K523, and E528.

This sequence belongs to the protein kinase superfamily. Ser/Thr protein kinase family. CDPK subfamily.

It localises to the membrane. It carries out the reaction L-seryl-[protein] + ATP = O-phospho-L-seryl-[protein] + ADP + H(+). It catalyses the reaction L-threonyl-[protein] + ATP = O-phospho-L-threonyl-[protein] + ADP + H(+). Its activity is regulated as follows. Activated by calcium. Autophosphorylation may play an important role in the regulation of the kinase activity. In terms of biological role, may play a role in signal transduction pathways that involve calcium as a second messenger. This is Calcium-dependent protein kinase 5 (CPK5) from Arabidopsis thaliana (Mouse-ear cress).